A 598-amino-acid chain; its full sequence is Glutamine--fructose-6-phosphate aminotransferase [isomerizing] (598 aa).

The active-site Nucleophile; for GATase activity is the cysteine 2. One can recognise a Glutamine amidotransferase type-2 domain in the interval 2–219; the sequence is CGIIGYIGPR…DGEYGIVSKD (218 aa). 2 consecutive SIS domains span residues 280 to 420 and 449 to 588; these read VAEL…LVGI and IAVK…PDRP. Residue lysine 593 is the For Fru-6P isomerization activity of the active site.

As to quaternary structure, homodimer.

Its subcellular location is the cytoplasm. It carries out the reaction D-fructose 6-phosphate + L-glutamine = D-glucosamine 6-phosphate + L-glutamate. In terms of biological role, catalyzes the first step in hexosamine metabolism, converting fructose-6P into glucosamine-6P using glutamine as a nitrogen source. The chain is Glutamine--fructose-6-phosphate aminotransferase [isomerizing] from Pyrococcus horikoshii (strain ATCC 700860 / DSM 12428 / JCM 9974 / NBRC 100139 / OT-3).